A 688-amino-acid chain; its full sequence is Translation initiation factor IF-2 (688 aa).

Residues Leu50 to Glu62 show a composition bias toward basic and acidic residues. The segment at Leu50 to Asn95 is disordered. The segment covering Lys72–Lys82 has biased composition (low complexity). A compositionally biased stretch (basic and acidic residues) spans Lys86–Asn95. One can recognise a tr-type G domain in the interval Lys187–Glu354. The tract at residues Gly196–Thr203 is G1. Gly196–Thr203 serves as a coordination point for GTP. The segment at Gly221 to His225 is G2. A G3 region spans residues Asp242–Gly245. Residues Asp242–His246 and Asn296–Asp299 each bind GTP. Residues Asn296–Asp299 form a G4 region. Positions Ser332–His334 are G5.

Belongs to the TRAFAC class translation factor GTPase superfamily. Classic translation factor GTPase family. IF-2 subfamily.

The protein resides in the cytoplasm. Its function is as follows. One of the essential components for the initiation of protein synthesis. Protects formylmethionyl-tRNA from spontaneous hydrolysis and promotes its binding to the 30S ribosomal subunits. Also involved in the hydrolysis of GTP during the formation of the 70S ribosomal complex. This is Translation initiation factor IF-2 from Clostridium botulinum (strain Langeland / NCTC 10281 / Type F).